We begin with the raw amino-acid sequence, 92 residues long: uncharacterized protein (92 aa).

Helical transmembrane passes span 1 to 21, 29 to 49, and 51 to 71; these read MEVL…GVIL, IIML…CYYL, and IAIV…LGYL.

The protein localises to the cell membrane. This is an uncharacterized protein from Methanocaldococcus jannaschii (strain ATCC 43067 / DSM 2661 / JAL-1 / JCM 10045 / NBRC 100440) (Methanococcus jannaschii).